Reading from the N-terminus, the 454-residue chain is CCA-adding enzyme (454 aa).

Serine 53 and lysine 56 together coordinate ATP. The CTP site is built by serine 53 and lysine 56. Mg(2+)-binding residues include aspartate 65, aspartate 67, and aspartate 119. 3 residues coordinate ATP: histidine 142, lysine 161, and tyrosine 170. 3 residues coordinate CTP: histidine 142, lysine 161, and tyrosine 170.

The protein belongs to the tRNA nucleotidyltransferase/poly(A) polymerase family. Archaeal CCA-adding enzyme subfamily. Homodimer. Requires Mg(2+) as cofactor.

The catalysed reaction is a tRNA precursor + 2 CTP + ATP = a tRNA with a 3' CCA end + 3 diphosphate. It catalyses the reaction a tRNA with a 3' CCA end + 2 CTP + ATP = a tRNA with a 3' CCACCA end + 3 diphosphate. Its function is as follows. Catalyzes the addition and repair of the essential 3'-terminal CCA sequence in tRNAs without using a nucleic acid template. Adds these three nucleotides in the order of C, C, and A to the tRNA nucleotide-73, using CTP and ATP as substrates and producing inorganic pyrophosphate. tRNA 3'-terminal CCA addition is required both for tRNA processing and repair. Also involved in tRNA surveillance by mediating tandem CCA addition to generate a CCACCA at the 3' terminus of unstable tRNAs. While stable tRNAs receive only 3'-terminal CCA, unstable tRNAs are marked with CCACCA and rapidly degraded. The chain is CCA-adding enzyme from Thermococcus gammatolerans (strain DSM 15229 / JCM 11827 / EJ3).